The primary structure comprises 291 residues: MLNKFFKKTKYITVSQRALGDIHDDFTKKPSIPNGMWVKCDGCGKVLYKNDMEKNNKVCYHCGYHFRMNALERLELILDKESFYEFDKDITAANPIEFKGYEDKIKNMQNKTNIKEAVITGKGTIGREEAVVCIMDSNFMMGSMGSVVGEKITRAVEKSIELKLPLIIFTTSGGARMQEGIFSLMQMAKVSGAISRLNEEGLLYLSVLTDPTTGGVTASFAMIGDIILAEPGALIGFAGKRVIEQTIKQKLPEGFQKAEFLLQHGFIDNIVSRENLKETLRKILVIHGRGN.

The region spanning 36 to 291 is the CoA carboxyltransferase N-terminal domain; that stretch reads MWVKCDGCGK…KILVIHGRGN (256 aa). Zn(2+)-binding residues include Cys-40, Cys-43, Cys-59, and Cys-62. A C4-type zinc finger spans residues 40-62; it reads CDGCGKVLYKNDMEKNNKVCYHC.

The protein belongs to the AccD/PCCB family. In terms of assembly, acetyl-CoA carboxylase is a heterohexamer composed of biotin carboxyl carrier protein (AccB), biotin carboxylase (AccC) and two subunits each of ACCase subunit alpha (AccA) and ACCase subunit beta (AccD). Zn(2+) is required as a cofactor.

Its subcellular location is the cytoplasm. It carries out the reaction N(6)-carboxybiotinyl-L-lysyl-[protein] + acetyl-CoA = N(6)-biotinyl-L-lysyl-[protein] + malonyl-CoA. Its pathway is lipid metabolism; malonyl-CoA biosynthesis; malonyl-CoA from acetyl-CoA: step 1/1. Its function is as follows. Component of the acetyl coenzyme A carboxylase (ACC) complex. Biotin carboxylase (BC) catalyzes the carboxylation of biotin on its carrier protein (BCCP) and then the CO(2) group is transferred by the transcarboxylase to acetyl-CoA to form malonyl-CoA. The polypeptide is Acetyl-coenzyme A carboxylase carboxyl transferase subunit beta (Clostridium kluyveri (strain NBRC 12016)).